The primary structure comprises 162 residues: Lymphocyte antigen 86 (162 aa).

A signal peptide spans 1–20 (MKGFTATLFLWTLIFPSCSG). 3 disulfide bridges follow: cysteine 33–cysteine 58, cysteine 45–cysteine 154, and cysteine 102–cysteine 112. The N-linked (GlcNAc...) asparagine glycan is linked to asparagine 96. Residue asparagine 156 is glycosylated (N-linked (GlcNAc...) asparagine).

As to quaternary structure, M-shaped tetramer of two CD180-LY86 heterodimers. Highly expressed in B-cells, monocytes and tonsil.

The protein localises to the secreted. The protein resides in the extracellular space. In terms of biological role, may cooperate with CD180 and TLR4 to mediate the innate immune response to bacterial lipopolysaccharide (LPS) and cytokine production. Important for efficient CD180 cell surface expression. The polypeptide is Lymphocyte antigen 86 (LY86) (Homo sapiens (Human)).